The primary structure comprises 381 residues: Testis-specific expressed protein 55 (381 aa).

Disordered stretches follow at residues 1 to 176 (MDEP…SDPH) and 292 to 317 (TTEY…QSSR). Basic and acidic residues-rich tracts occupy residues 8 to 24 (SLNH…EKNN) and 65 to 103 (RTSE…ERRT). Residues 104–113 (SQPPNQQLPS) show a composition bias toward polar residues. The span at 114–125 (HSERKTSGKIDG) shows a compositional bias: basic and acidic residues. Residues 134–143 (TDQETSEFDD) show a composition bias toward acidic residues. Polar residues-rich tracts occupy residues 147–163 (SAST…QEYN) and 292–302 (TTEYTSDTTPV). The segment covering 307–317 (RSSQRSSQSSR) has biased composition (low complexity).

As to expression, testis-specific.

Its subcellular location is the nucleus. The protein is Testis-specific expressed protein 55 of Mus musculus (Mouse).